We begin with the raw amino-acid sequence, 91 residues long: DNA-directed RNA polymerase subunit omega (91 aa).

This sequence belongs to the RNA polymerase subunit omega family. The RNAP catalytic core consists of 2 alpha, 1 beta, 1 beta' and 1 omega subunit. When a sigma factor is associated with the core the holoenzyme is formed, which can initiate transcription.

The catalysed reaction is RNA(n) + a ribonucleoside 5'-triphosphate = RNA(n+1) + diphosphate. Its function is as follows. Promotes RNA polymerase assembly. Latches the N- and C-terminal regions of the beta' subunit thereby facilitating its interaction with the beta and alpha subunits. The sequence is that of DNA-directed RNA polymerase subunit omega from Aeromonas hydrophila subsp. hydrophila (strain ATCC 7966 / DSM 30187 / BCRC 13018 / CCUG 14551 / JCM 1027 / KCTC 2358 / NCIMB 9240 / NCTC 8049).